The following is a 1034-amino-acid chain: MDDWRSTISTQERSQFVTELAQILADMSRINGGEKANFNLEKLKKSAEQFESSLYASCNSKDLYLDAMRKRIAAMDSAKRKSIEAQRQKLAQAQAQAQAVQRQQQQQQQQHHMQQQGSGQQQANGIPANINAQMFLNQQAQARQQAQRQIRSTLTGQQQQQPMPQQPQPQQQQPNMMRPQLTLQQQQQLANELKVTEIPRELLQKIPNLPPGITTWPQITFWAQKNRPSQNDLIITKKVYQLHQQLLNKSKLQQSNVNRMNTSVQQPGMGVQQSPNQRMNMNQVPQQQQQVRQQQQQQQQQQQQQHKQQPQHQEPPAVLGRLNQVFTQAEQKMLYEAGKKMIENLQRSGKLPPNLDSQQQLLYIKKYMNQMVLKKMQQLGIPIPMPGSAQQQSQLLQQQQQQQQQQQQQQRQQQIPQVQQAPLQQPQVQPPQSQQAQSRRQAMGMKPTPVIPNAGVMKPQPQQTPQNIQQPMMQQQSSPPPQQQQQQQQQSKISVPRPTEQDMLALKKLNAEVTKNPVKLNDITNRLTNDQKQQIRSKLHANQQLFSSVESFIPTLYMLTRNEEHIRQLLQIRMLTREIMEKAVRGVFLVEPNVVDKVIFRYQKYYEYTKEQLLRRQQQLMTMRQMQNNNPNLTANDLLNQQQLLQNRKLNLAMQSQTQEPPQIAAQQQQPQQPISGVNNNSNMGIVLDSSLNATSRSGTNTMEFLNSPEFSAISPAVPSPNKDKKNPATRAVKGKKNSQSGIPTSNPQSNSNASVVNSRTATPTVIPGSSPMFNNKSLASGQQNSPSPKTMINSPPQQDNPYKNDELALKKMAIRTAELMSRYKHRKEVFVMSSIDLFLSTFADCLDIKDDAVDLVHKTPQPILDQINGTGKKKLSKAAQKARDQDPVEISVRNNKLLMPSKSEKTLRSFKIPIADITACFKPFADPKQLILNSTPKHDEKKRKFDDLEISPTDSSSELMSESKKVKFDSPDDMFLNDPSSVQETKPLVPSELGMYSINSKPSIPSSAGNMPAPNESTDSGMNIWDWNYWESL.

Low complexity-rich tracts occupy residues 101–123 (QRQQ…QQQA), 138–149 (QQAQARQQAQRQ), 157–183 (QQQQ…QLTL), 281–312 (MNQV…QPQH), 413–441 (QQIP…SRRQ), 459–490 (PQPQ…QQQQ), and 655–675 (QSQT…QQPI). Disordered regions lie at residues 101 to 124 (QRQQ…QQAN), 138 to 183 (QQAQ…QLTL), 281 to 315 (MNQV…HQEP), 413 to 497 (QQIP…SVPR), 655 to 682 (QSQT…NNNS), 712 to 804 (SAIS…NPYK), and 951 to 1020 (ISPT…ESTD). Polar residues-rich tracts occupy residues 738 to 764 (NSQS…TATP) and 772 to 802 (PMFN…QDNP). Positions 962–971 (SESKKVKFDS) are enriched in basic and acidic residues. A compositionally biased stretch (polar residues) spans 998–1020 (SINSKPSIPSSAGNMPAPNESTD).

The protein belongs to the Mediator complex subunit 15 family. Component of the Mediator complex.

The protein resides in the nucleus. Its function is as follows. Component of the Mediator complex, a coactivator involved in the regulated transcription of nearly all RNA polymerase II-dependent genes. Mediator functions as a bridge to convey information from gene-specific regulatory proteins to the basal RNA polymerase II transcription machinery. Mediator is recruited to promoters by direct interactions with regulatory proteins and serves as a scaffold for the assembly of a functional preinitiation complex with RNA polymerase II and the general transcription factors. Required for transcription of genes encoding galactose-metabolizing enzymes. Essential for normal growth on nonfermentable carbon sources, for sporulation and mating. The polypeptide is Mediator of RNA polymerase II transcription subunit 15 (GAL11) (Kluyveromyces lactis (strain ATCC 8585 / CBS 2359 / DSM 70799 / NBRC 1267 / NRRL Y-1140 / WM37) (Yeast)).